Here is a 37-residue protein sequence, read N- to C-terminus: Large ribosomal subunit protein bL36c (37 aa).

It belongs to the bacterial ribosomal protein bL36 family.

It is found in the plastid. The protein localises to the chloroplast. The sequence is that of Large ribosomal subunit protein bL36c from Coffea arabica (Arabian coffee).